The following is a 426-amino-acid chain: Serine--tRNA ligase (426 aa).

233-235 (TAE) serves as a coordination point for L-serine. 264-266 (RSE) lines the ATP pocket. Glu-287 contributes to the L-serine binding site. 351-354 (EISS) serves as a coordination point for ATP. Ser-387 lines the L-serine pocket.

It belongs to the class-II aminoacyl-tRNA synthetase family. Type-1 seryl-tRNA synthetase subfamily. As to quaternary structure, homodimer. The tRNA molecule binds across the dimer.

Its subcellular location is the cytoplasm. It carries out the reaction tRNA(Ser) + L-serine + ATP = L-seryl-tRNA(Ser) + AMP + diphosphate + H(+). The catalysed reaction is tRNA(Sec) + L-serine + ATP = L-seryl-tRNA(Sec) + AMP + diphosphate + H(+). Its pathway is aminoacyl-tRNA biosynthesis; selenocysteinyl-tRNA(Sec) biosynthesis; L-seryl-tRNA(Sec) from L-serine and tRNA(Sec): step 1/1. Catalyzes the attachment of serine to tRNA(Ser). Is also able to aminoacylate tRNA(Sec) with serine, to form the misacylated tRNA L-seryl-tRNA(Sec), which will be further converted into selenocysteinyl-tRNA(Sec). The protein is Serine--tRNA ligase of Clostridium botulinum (strain 657 / Type Ba4).